The following is a 485-amino-acid chain: MSDSHSHSDILLCQRCNKNHASVISRKEKFCTDCFRNFVSLKQRKQMMSDQYYQDIFKVMYKDKLRSEQDAHLQNLNSKILVPLSFGSSSLVMLDILNDTLLEQSITHRGKTGFTVDVIICFHDEQIQNQIKENVSKLINAKYKENNQKIKFHLVDINQFFDNSPHLQSLVLQETDFLIKSLNLKDQSIIEKKLTLSEILDQCSDRSTYQDLLAFVTKHAIKKYAFQHDFKAILWGHSMTRLADEVISLIVKGRGSAISSSLNTDDFDENYGNKFKNLYPLKDILLTEIDAYCYNSGLHNYLINYNIQDALLVNKINQNTDKIQTNSLKNKTINELARNYFEVIEGDYSNVISTVVRTGDKLAEPKSQENFKISKCNLCMQKIYSDPSQWITSITENKGHPLETDEEKENYQRWKNYNNDKLKNSEMDFFRLNEFVKENGSKACLCYGCTITLNTFKDKSVVWPVHDDKELNSVLEDYVLTDHEE.

It belongs to the CTU2/NCS2 family.

The protein localises to the cytoplasm. The protein operates within tRNA modification; 5-methoxycarbonylmethyl-2-thiouridine-tRNA biosynthesis. Plays a central role in 2-thiolation of mcm(5)S(2)U at tRNA wobble positions of tRNA(Lys), tRNA(Glu) and tRNA(Gln). May act by forming a heterodimer with NCS6 that ligates sulfur from thiocarboxylated URM1 onto the uridine of tRNAs at wobble position. Prior mcm(5) tRNA modification by the elongator complex is required for 2-thiolation. May also be involved in protein urmylation. This is Cytoplasmic tRNA 2-thiolation protein 2 from Vanderwaltozyma polyspora (strain ATCC 22028 / DSM 70294 / BCRC 21397 / CBS 2163 / NBRC 10782 / NRRL Y-8283 / UCD 57-17) (Kluyveromyces polysporus).